We begin with the raw amino-acid sequence, 813 residues long: Sodium/hydrogen exchanger 2 (813 aa).

Transmembrane regions (helical) follow at residues 108 to 128, 139 to 159, 170 to 190, 210 to 230, 238 to 258, 279 to 299, and 309 to 329; these read IVPESCLLIMVGLLLGGIIFG, TDVFFLYLLPPIVLDAGYFMP, IFWYAVVGTLWNSIGIGLSLF, LFGSLISAVDPVAVLAVFENI, ILVFGESLLNDAVTVVLYNLF, FFVVGIGGVLIGILLGFIAAF, and VIEPLFVFLYSYLSYITAEMF. An N-linked (GlcNAc...) asparagine glycan is attached at Asn-351. 4 helical membrane passes run 362–382, 393–413, 431–451, and 460–480; these read YFMKMLSSVSETLIFIFMGVS, AFVCFTLAFCLIWRALGVFVL, FIIAYGGLRGAICFALVFLLP, and LFITAAIVVIFFTVFILGITI. Basic and acidic residues predominate over residues 649–661; the sequence is LRKDNSLNRERRA. Disordered stretches follow at residues 649-709 and 736-813; these read LRKD…NLQP and DVGS…NEKP. Over residues 687-696 the composition is skewed to polar residues; that stretch reads VSNADGNSSD. Composition is skewed to basic and acidic residues over residues 770-781 and 797-813; these read KDQRFGRGREDS and RASEPGNRKGRLGNEKP.

Belongs to the monovalent cation:proton antiporter 1 (CPA1) transporter (TC 2.A.36) family. Interacts with CHP1 and CHP2. As to expression, predominantly in small intestine, colon, and stomach, with much lower levels in skeletal muscle, kidney, brain, testis, uterus, heart and lung.

The protein resides in the apical cell membrane. It carries out the reaction Na(+)(in) + H(+)(out) = Na(+)(out) + H(+)(in). Its activity is regulated as follows. Li(+) activates Na(+)/H(+) exchanger. Functionally, plasma membrane Na(+)/H(+) antiporter. Mediates the electroneutral exchange of intracellular H(+) ions for extracellular Na(+). Major apical Na(+)/H(+) exchanger in the base of the colonic crypt. Controls in the colonic crypt intracellular pH (pHi) to direct colonic epithelial cell differentiation into the absorptive enterocyte lineage at the expense of the secretory lineage. In Rattus norvegicus (Rat), this protein is Sodium/hydrogen exchanger 2 (Slc9a2).